A 247-amino-acid chain; its full sequence is Adenosylcobinamide-GDP ribazoletransferase (247 aa).

The next 5 helical transmembrane spans lie at 34–54, 59–79, 113–133, 138–158, and 194–214; these read IITFPLIGLLLGAISGLVFMV, CGAPLAALFSVLVLVLMTGGF, GGLALIFVVLAKILVLSELAL, ILASLAAACAVSRGTAALLMY, and VLLPGMHGVAAMVVTMVAIFI.

This sequence belongs to the CobS family. Mg(2+) is required as a cofactor.

It localises to the cell inner membrane. The enzyme catalyses alpha-ribazole + adenosylcob(III)inamide-GDP = adenosylcob(III)alamin + GMP + H(+). The catalysed reaction is alpha-ribazole 5'-phosphate + adenosylcob(III)inamide-GDP = adenosylcob(III)alamin 5'-phosphate + GMP + H(+). Its pathway is cofactor biosynthesis; adenosylcobalamin biosynthesis; adenosylcobalamin from cob(II)yrinate a,c-diamide: step 7/7. In terms of biological role, joins adenosylcobinamide-GDP and alpha-ribazole to generate adenosylcobalamin (Ado-cobalamin). Also synthesizes adenosylcobalamin 5'-phosphate from adenosylcobinamide-GDP and alpha-ribazole 5'-phosphate. This chain is Adenosylcobinamide-GDP ribazoletransferase, found in Escherichia coli O81 (strain ED1a).